Here is a 105-residue protein sequence, read N- to C-terminus: Large ribosomal subunit protein eL30 (105 aa).

The protein belongs to the eukaryotic ribosomal protein eL30 family.

The chain is Large ribosomal subunit protein eL30 (RPL30) from Candida glabrata (strain ATCC 2001 / BCRC 20586 / JCM 3761 / NBRC 0622 / NRRL Y-65 / CBS 138) (Yeast).